We begin with the raw amino-acid sequence, 239 residues long: Ribosomal RNA small subunit methyltransferase G (239 aa).

Residues G78, F83, 129–130 (AE), and R148 each bind S-adenosyl-L-methionine.

It belongs to the methyltransferase superfamily. RNA methyltransferase RsmG family.

The protein resides in the cytoplasm. In terms of biological role, specifically methylates the N7 position of a guanine in 16S rRNA. The polypeptide is Ribosomal RNA small subunit methyltransferase G (Clostridium botulinum (strain Eklund 17B / Type B)).